A 385-amino-acid polypeptide reads, in one-letter code: Sensor histidine kinase Hik2 (385 aa).

Residues 11–131 enclose the GAF domain; it reads ALCRTQLELV…QQVAQTLAIA (121 aa). Residue cysteine 13 coordinates [3Fe-4S] cluster. The segment at 142 to 270 is DHp domain, may sense NaCl; that stretch reads SHSPAQPLDQ…PQLPPIWLEE (129 aa). Residues 158–381 enclose the Histidine kinase domain; sequence DLLHQLRNPV…AFTLAIPWQM (224 aa). Histidine 161 is subject to Phosphohistidine; by autocatalysis.

Belongs to the chloroplast sensor kinase protein family. Hexamers; upon treatment with 0.5 M NaCl only tetramers are seen. The tetramers are probably inactive. It depends on [3Fe-4S] cluster as a cofactor. Autophosphorylates, possibly on His-161.

It catalyses the reaction ATP + protein L-histidine = ADP + protein N-phospho-L-histidine.. Member of 2 two-component regulatory system(s) Hik2/Rre1 and Hik2/RppA. Transduces PQ (plastoquinone) redox signals to photosystem gene expression machinery during the adjustment of photosystem stoichiometry. Reduced PQ suppresses its autophosphorylation activity (i.e. kinase activity is higher under oxidizing conditions). As part of a two-component regulatory system with Rre1, controls expression of sigB and several other genes in response to hyperosmotic stress. May transfer phosphate to RppA in a possible Hik2/RppA two-component system. The chain is Sensor histidine kinase Hik2 from Thermosynechococcus vestitus (strain NIES-2133 / IAM M-273 / BP-1).